The chain runs to 196 residues: Pyridoxal 5'-phosphate synthase subunit PdxT (196 aa).

47 to 49 (GES) contributes to the L-glutamine binding site. The active-site Nucleophile is Cys79. L-glutamine contacts are provided by residues Arg106 and 134-135 (IR). Residues His170 and Glu172 each act as charge relay system in the active site.

This sequence belongs to the glutaminase PdxT/SNO family. In terms of assembly, in the presence of PdxS, forms a dodecamer of heterodimers. Only shows activity in the heterodimer.

The catalysed reaction is aldehydo-D-ribose 5-phosphate + D-glyceraldehyde 3-phosphate + L-glutamine = pyridoxal 5'-phosphate + L-glutamate + phosphate + 3 H2O + H(+). It carries out the reaction L-glutamine + H2O = L-glutamate + NH4(+). The protein operates within cofactor biosynthesis; pyridoxal 5'-phosphate biosynthesis. Its function is as follows. Catalyzes the hydrolysis of glutamine to glutamate and ammonia as part of the biosynthesis of pyridoxal 5'-phosphate. The resulting ammonia molecule is channeled to the active site of PdxS. This is Pyridoxal 5'-phosphate synthase subunit PdxT from Bacillus anthracis (strain A0248).